Reading from the N-terminus, the 449-residue chain is Biotin carboxylase (449 aa).

The Biotin carboxylation domain maps to 4-448 (MIEKVLIANR…NIHYLEKMLG (445 aa)). ATP contacts are provided by residues Lys119, Lys162, 168-169 (GG), 204-207 (EKYL), His212, and His239. The ATP-grasp domain occupies 123 to 320 (IAAMKAAGVP…IVKEQILIAA (198 aa)). Residue Lys241 coordinates hydrogencarbonate. Positions 279 and 291 each coordinate ATP. Mg(2+)-binding residues include Glu279, Glu291, and Asn293. Positions 279, 291, and 293 each coordinate Mn(2+). Residues Arg295, Val298, and Arg341 each coordinate hydrogencarbonate. Arg295 is an active-site residue. Biotin is bound at residue Arg341.

Acetyl-CoA carboxylase is a heterohexamer of biotin carboxyl carrier protein, biotin carboxylase and the two subunits of carboxyl transferase in a 2:2 complex. Mg(2+) serves as cofactor. The cofactor is Mn(2+).

The enzyme catalyses N(6)-biotinyl-L-lysyl-[protein] + hydrogencarbonate + ATP = N(6)-carboxybiotinyl-L-lysyl-[protein] + ADP + phosphate + H(+). It participates in lipid metabolism; malonyl-CoA biosynthesis; malonyl-CoA from acetyl-CoA: step 1/1. In terms of biological role, this protein is a component of the acetyl coenzyme A carboxylase complex; first, biotin carboxylase catalyzes the carboxylation of the carrier protein and then the transcarboxylase transfers the carboxyl group to form malonyl-CoA. This is Biotin carboxylase (accC) from Allochromatium vinosum (strain ATCC 17899 / DSM 180 / NBRC 103801 / NCIMB 10441 / D) (Chromatium vinosum).